Reading from the N-terminus, the 101-residue chain is Putative septation protein SpoVG (101 aa).

Residues 82–101 form a disordered region; the sequence is ELKKGGAAPARATGTDPHED.

This sequence belongs to the SpoVG family.

Could be involved in septation. This chain is Putative septation protein SpoVG, found in Anaeromyxobacter dehalogenans (strain 2CP-1 / ATCC BAA-258).